We begin with the raw amino-acid sequence, 28 residues long: Conotoxin Cl6a (28 aa).

3 disulfide bridges follow: Cys3–Cys13, Cys7–Cys19, and Cys12–Cys24.

Expressed by the venom duct.

The protein resides in the secreted. In Californiconus californicus (California cone), this protein is Conotoxin Cl6a.